A 497-amino-acid chain; its full sequence is Glycerol kinase (497 aa).

Position 12 (T12) interacts with ADP. ATP is bound by residues T12, T13, and S14. A sn-glycerol 3-phosphate-binding site is contributed by T12. R16 contacts ADP. 4 residues coordinate sn-glycerol 3-phosphate: R82, E83, Y134, and D243. R82, E83, Y134, D243, and Q244 together coordinate glycerol. Residues T265 and G308 each contribute to the ADP site. Residues T265, G308, Q312, and G409 each coordinate ATP. Residues G409 and N413 each contribute to the ADP site.

It belongs to the FGGY kinase family.

It catalyses the reaction glycerol + ATP = sn-glycerol 3-phosphate + ADP + H(+). It participates in polyol metabolism; glycerol degradation via glycerol kinase pathway; sn-glycerol 3-phosphate from glycerol: step 1/1. With respect to regulation, inhibited by fructose 1,6-bisphosphate (FBP). Functionally, key enzyme in the regulation of glycerol uptake and metabolism. Catalyzes the phosphorylation of glycerol to yield sn-glycerol 3-phosphate. In Nitratidesulfovibrio vulgaris (strain DSM 19637 / Miyazaki F) (Desulfovibrio vulgaris), this protein is Glycerol kinase.